Here is a 367-residue protein sequence, read N- to C-terminus: tRNA-specific 2-thiouridylase MnmA (367 aa).

Residues 13-20 and methionine 39 each bind ATP; that span reads GLSGGVDS. The tract at residues 99–101 is interaction with target base in tRNA; that stretch reads NPD. Residue cysteine 104 is the Nucleophile of the active site. Cysteine 104 and cysteine 200 are joined by a disulfide. An ATP-binding site is contributed by glycine 128. Residues 150-152 are interaction with tRNA; the sequence is KDQ. The Cysteine persulfide intermediate role is filled by cysteine 200. The tract at residues 307 to 308 is interaction with tRNA; the sequence is RY.

Belongs to the MnmA/TRMU family.

It localises to the cytoplasm. It catalyses the reaction S-sulfanyl-L-cysteinyl-[protein] + uridine(34) in tRNA + AH2 + ATP = 2-thiouridine(34) in tRNA + L-cysteinyl-[protein] + A + AMP + diphosphate + H(+). Functionally, catalyzes the 2-thiolation of uridine at the wobble position (U34) of tRNA, leading to the formation of s(2)U34. The sequence is that of tRNA-specific 2-thiouridylase MnmA from Neisseria meningitidis serogroup C / serotype 2a (strain ATCC 700532 / DSM 15464 / FAM18).